Here is a 139-residue protein sequence, read N- to C-terminus: Large-conductance mechanosensitive channel (139 aa).

The next 3 membrane-spanning stretches (helical) occupy residues 16–36, 40–60, and 79–99; these read VIDLAVGVIIGAAFNDIVKAL, IVMPPIGLVLSGIDFSDLAWV, and GAFINTCIRFLIVAWAVFMLV.

Belongs to the MscL family. As to quaternary structure, homopentamer.

It is found in the cell inner membrane. Channel that opens in response to stretch forces in the membrane lipid bilayer. May participate in the regulation of osmotic pressure changes within the cell. In Phenylobacterium zucineum (strain HLK1), this protein is Large-conductance mechanosensitive channel.